A 1366-amino-acid polypeptide reads, in one-letter code: Collagen alpha-2(I) chain (1366 aa).

An N-terminal signal peptide occupies residues 1–22 (MLSFVDTRTLLLLAVTLCLATC). Residue glutamine 23 is modified to Pyrrolidone carboxylic acid. Residues 23 to 79 (QSLQEETVRKGPAGDRGPRGERGPPGPPGRDGEDGPTGPPGPPGPPGPPGLGGNFAA) constitute a propeptide, N-terminal propeptide. Basic and acidic residues predominate over residues 28-44 (ETVRKGPAGDRGPRGER). The tract at residues 28–1130 (ETVRKGPAGD…QPRSAPSLRP (1103 aa)) is disordered. Residues proline 47, proline 50, proline 62, proline 65, proline 68, and proline 71 each carry the 4-hydroxyproline modification. Over residues 59-71 (TGPPGPPGPPGPP) the composition is skewed to pro residues. Glutamine 80 is subject to Pyrrolidone carboxylic acid. Lysine 84 carries the allysine modification. Positions 84–94 (KGVGLGPGPMG) are enriched in gly residues. Positions 95–140 (LMGPRGPPGAAGAPGPQGFQGPAGEPGEPGQTGPAGARGPAGPPGK) are enriched in low complexity. Residues proline 102 and proline 108 each carry the 4-hydroxyproline modification. A compositionally biased stretch (basic and acidic residues) spans 141 to 155 (AGEDGHPGKPGRPGE). Position 177 is a 5-hydroxylysine; alternate (lysine 177). An O-linked (Gal...) hydroxylysine; alternate glycan is attached at lysine 177. 6 stretches are compositionally biased toward low complexity: residues 225 to 254 (VGAP…SAGP), 269 to 293 (AVGN…LSGP), 300 to 321 (PGAN…AGAP), 330 to 345 (PGPV…RGLV), 398 to 410 (LRGS…LPGA), and 419 to 434 (PPGS…VRGP). Residues proline 420, proline 441, and proline 444 each carry the 4-hydroxyproline modification. Composition is skewed to low complexity over residues 470–489 (LPGI…RGEP) and 513–531 (AGLA…NGAQ). Positions 538–547 (GVQGGKGEQG) are enriched in gly residues. Composition is skewed to low complexity over residues 594-611 (PGES…SRGP), 623-648 (EPGV…RGAA), 663-710 (RGEI…PRGS), and 717-737 (VGPA…QPGA). Residues 738-747 (KGERGAKGPK) are compositionally biased toward basic and acidic residues. The span at 752 to 765 (VVGPTGPVGAAGPA) shows a compositional bias: low complexity. Gly residues predominate over residues 775–784 (GSRGDGGPPG). 5 stretches are compositionally biased toward low complexity: residues 786–795 (TGFPGAAGRT), 849–876 (SGEA…LGLP), 884–932 (LPGV…NPGN), 956–974 (PVGA…PAGK), and 983–1001 (PSGP…PSGP). The segment covering 1005-1016 (RGDKGEPGEKGP) has biased composition (basic and acidic residues). Residues 1089–1101 (AGPPGPPGPPGPP) are compositionally biased toward pro residues. Positions 1120-1366 (DQPRSAPSLR…FVDIGPVCFK (247 aa)) are cleaved as a propeptide — C-terminal propeptide. In terms of domain architecture, Fibrillar collagen NC1 spans 1133–1366 (YEVDATLKSL…FVDIGPVCFK (234 aa)). Disulfide bonds link cysteine 1163–cysteine 1195, cysteine 1203–cysteine 1364, and cysteine 1272–cysteine 1317. Residues aspartate 1181, asparagine 1183, glutamine 1184, cysteine 1186, and aspartate 1189 each coordinate Ca(2+). Residue asparagine 1267 is glycosylated (N-linked (GlcNAc...) asparagine).

It belongs to the fibrillar collagen family. As to quaternary structure, trimers of one alpha 2(I) and two alpha 1(I) chains. Interacts (via C-terminus) with TMEM131 (via PapD-L domain); the interaction is direct and is involved in assembly and TRAPPIII ER-to-Golgi transport complex-dependent secretion of collagen. In terms of processing, prolines at the third position of the tripeptide repeating unit (G-X-Y) are hydroxylated in some or all of the chains. Forms the fibrils of tendon, ligaments and bones. In bones the fibrils are mineralized with calcium hydroxyapatite.

Its subcellular location is the secreted. It is found in the extracellular space. The protein localises to the extracellular matrix. Its function is as follows. Type I collagen is a member of group I collagen (fibrillar forming collagen). This Homo sapiens (Human) protein is Collagen alpha-2(I) chain (COL1A2).